Reading from the N-terminus, the 166-residue chain is Small ribosomal subunit protein uS5 (166 aa).

In terms of domain architecture, S5 DRBM spans 12-75; the sequence is YIEKLVQVNR…EAARRNMIQV (64 aa).

Belongs to the universal ribosomal protein uS5 family. As to quaternary structure, part of the 30S ribosomal subunit. Contacts proteins S4 and S8.

With S4 and S12 plays an important role in translational accuracy. In terms of biological role, located at the back of the 30S subunit body where it stabilizes the conformation of the head with respect to the body. This is Small ribosomal subunit protein uS5 from Azotobacter vinelandii (strain DJ / ATCC BAA-1303).